Consider the following 120-residue polypeptide: Flagellar protein FliT (120 aa).

Residues 1 to 50 are required for homodimerization; sequence MERHQHLLSEYQQILTLSEQMLMLATVENWNALVDLEMTYLKAVENTANI. The tract at residues 60 to 98 is fliD binding; it reads LQELLRQKLRSILENEIEIKRLLQRRLDKLSELVGQSTR.

It belongs to the FliT family. In terms of assembly, homodimer. Interacts with FliD and FlhC.

Its subcellular location is the cytoplasm. The protein resides in the cytosol. Its function is as follows. Dual-function protein that regulates the transcription of class 2 flagellar operons and that also acts as an export chaperone for the filament-capping protein FliD. As a transcriptional regulator, acts as an anti-FlhDC factor; it directly binds FlhC, thus inhibiting the binding of the FlhC/FlhD complex to class 2 promoters, resulting in decreased expression of class 2 flagellar operons. As a chaperone, effects FliD transition to the membrane by preventing its premature polymerization, and by directing it to the export apparatus. The sequence is that of Flagellar protein FliT from Yersinia pestis bv. Antiqua (strain Antiqua).